Consider the following 72-residue polypeptide: Translation initiation factor IF-1 (72 aa).

Residues 1–72 (MAKTDLLEVQ…ERGRIVFRHK (72 aa)) form the S1-like domain.

The protein belongs to the IF-1 family. In terms of assembly, component of the 30S ribosomal translation pre-initiation complex which assembles on the 30S ribosome in the order IF-2 and IF-3, IF-1 and N-formylmethionyl-tRNA(fMet); mRNA recruitment can occur at any time during PIC assembly.

The protein resides in the cytoplasm. One of the essential components for the initiation of protein synthesis. Stabilizes the binding of IF-2 and IF-3 on the 30S subunit to which N-formylmethionyl-tRNA(fMet) subsequently binds. Helps modulate mRNA selection, yielding the 30S pre-initiation complex (PIC). Upon addition of the 50S ribosomal subunit IF-1, IF-2 and IF-3 are released leaving the mature 70S translation initiation complex. The protein is Translation initiation factor IF-1 of Spiroplasma kunkelii.